The primary structure comprises 458 residues: Vitamin K-dependent protein C (458 aa).

Positions 1–27 (IPDDVGYRNQKTASKEGVCVVSKCQDG) are cleaved as a signal peptide. Residues 28 to 36 (PNTLPRAKR) constitute a propeptide that is removed on maturation. One can recognise a Gla domain in the interval 37-82 (ANSFLEELRPSSLERECVEEVCDLEEAKEIFQSVDDTLAFWYKYVD). 4-carboxyglutamate is present on residues glutamate 42, glutamate 43, glutamate 50, glutamate 52, glutamate 55, glutamate 56, glutamate 61, glutamate 62, and glutamate 65. Cysteines 53 and 58 form a disulfide. 4 cysteine pairs are disulfide-bonded: cysteine 86/cysteine 105, cysteine 95/cysteine 100, cysteine 99/cysteine 114, and cysteine 116/cysteine 125. EGF-like domains are found at residues 91 to 126 (SEHP…SFCQ) and 130 to 170 (RFSN…LQCE). Residue aspartate 107 is modified to (3R)-3-hydroxyaspartate. An N-linked (GlcNAc...) asparagine glycan is attached at asparagine 133. 5 disulfides stabilise this stretch: cysteine 134-cysteine 145, cysteine 141-cysteine 154, cysteine 156-cysteine 169, cysteine 177-cysteine 316, and cysteine 235-cysteine 251. A Peptidase S1 domain is found at 210-447 (IDGKLTRRGD…YLDWIHSHIE (238 aa)). Histidine 250 serves as the catalytic Charge relay system. Asparagine 287 carries an N-linked (GlcNAc...) asparagine glycan. The active-site Charge relay system is aspartate 296. N-linked (GlcNAc...) asparagine glycosylation is present at asparagine 352. Disulfide bonds link cysteine 370–cysteine 384 and cysteine 395–cysteine 423. Residue serine 399 is the Charge relay system of the active site.

This sequence belongs to the peptidase S1 family. In terms of assembly, synthesized as a single chain precursor, which is cleaved into a light chain and a heavy chain held together by a disulfide bond. The enzyme is then activated by thrombin, which cleaves a tetradecapeptide from the amino end of the heavy chain; this reaction, which occurs at the surface of endothelial cells, is strongly promoted by thrombomodulin. The vitamin K-dependent, enzymatic carboxylation of some Glu residues allows the modified protein to bind calcium. In terms of processing, the iron and 2-oxoglutarate dependent 3-hydroxylation of aspartate and asparagine is (R) stereospecific within EGF domains. In terms of tissue distribution, plasma; synthesized in the liver.

Its subcellular location is the secreted. The protein localises to the golgi apparatus. It localises to the endoplasmic reticulum. The enzyme catalyses Degradation of blood coagulation factors Va and VIIIa.. Functionally, protein C is a vitamin K-dependent serine protease that regulates blood coagulation by inactivating factors Va and VIIIa in the presence of calcium ions and phospholipids. Exerts a protective effect on the endothelial cell barrier function. This Oryctolagus cuniculus (Rabbit) protein is Vitamin K-dependent protein C (PROC).